The chain runs to 297 residues: GTPase Era (297 aa).

Residues 7 to 174 (RSGFVSIVGR…VQLVHGLLPE (168 aa)) enclose the Era-type G domain. The tract at residues 15 to 22 (GRPNVGKS) is G1. 15–22 (GRPNVGKS) lines the GTP pocket. The tract at residues 41–45 (QTTRN) is G2. A G3 region spans residues 62 to 65 (DTPG). GTP is bound by residues 62 to 66 (DTPGI) and 124 to 127 (NKID). The interval 124–127 (NKID) is G4. The G5 stretch occupies residues 153–155 (VSA). Residues 205–282 (THDEVPYSTA…FLELFVRVSG (78 aa)) form the KH type-2 domain.

Belongs to the TRAFAC class TrmE-Era-EngA-EngB-Septin-like GTPase superfamily. Era GTPase family. Monomer.

It localises to the cytoplasm. It is found in the cell inner membrane. Functionally, an essential GTPase that binds both GDP and GTP, with rapid nucleotide exchange. Plays a role in 16S rRNA processing and 30S ribosomal subunit biogenesis and possibly also in cell cycle regulation and energy metabolism. This Geobacter sp. (strain M21) protein is GTPase Era.